The following is a 247-amino-acid chain: Cell division protein ZapD (247 aa).

Belongs to the ZapD family. In terms of assembly, interacts with FtsZ.

Its subcellular location is the cytoplasm. In terms of biological role, cell division factor that enhances FtsZ-ring assembly. Directly interacts with FtsZ and promotes bundling of FtsZ protofilaments, with a reduction in FtsZ GTPase activity. The protein is Cell division protein ZapD of Enterobacter sp. (strain 638).